The primary structure comprises 423 residues: Mitogen-activated protein kinase 9 (423 aa).

Residues 26 to 321 (YQQLKPIGSG…VDEALRHPYI (296 aa)) form the Protein kinase domain. ATP-binding positions include 32–40 (IGSGAQGIV) and Lys-55. The active-site Proton acceptor is the Asp-151. Thr-183 is modified (phosphothreonine; by MAP2K7). Positions 183-185 (TPY) match the TXY motif. Tyr-185 is modified (phosphotyrosine; by MAP2K4). Basic and acidic residues predominate over residues 366–375 (RSKNGVKDQP). The interval 366-423 (RSKNGVKDQPSDAAVSSKATPSQSSSINDISSMSTEHTLASDTDSSLDASTGPLEGCR) is disordered. Residues 387-416 (SQSSSINDISSMSTEHTLASDTDSSLDAST) show a composition bias toward low complexity.

It belongs to the protein kinase superfamily. CMGC Ser/Thr protein kinase family. MAP kinase subfamily. As to quaternary structure, interacts with MECOM. Binds to at least four scaffolding proteins, MAPK8IP1/JIP-1, MAPK8IP2/JIP-2, MAPK8IP3/JIP-3/JSAP1 and SPAG9/MAPK8IP4/JIP-4. These proteins also bind other components of the JNK signaling pathway. Interacts with NFATC4. Interacts with ATF7; the interaction does not phosphorylate ATF7 but acts as a docking site for ATF7-associated partners such as JUN. Interacts with BCL10. Interacts with CTNNB1 and GSK3B. Interacts with DCLK2. Interacts with MAPKBP1. Interacts with POU5F1; phosphorylates POU5F1 at 'Ser-347'. Found in a complex with SH3RF1, RAC2, MAP3K7/TAK1, MAP2K7/MKK7, MAPK8IP1/JIP1 and MAPK8/JNK1. Requires Mg(2+) as cofactor. Dually phosphorylated on Thr-183 and Tyr-185 by MAP2K7 and MAP2K4, which activates the enzyme. Autophosphorylated in vitro.

The protein resides in the cytoplasm. The protein localises to the nucleus. It carries out the reaction L-seryl-[protein] + ATP = O-phospho-L-seryl-[protein] + ADP + H(+). It catalyses the reaction L-threonyl-[protein] + ATP = O-phospho-L-threonyl-[protein] + ADP + H(+). With respect to regulation, activated by threonine and tyrosine phosphorylation by either of two dual specificity kinases, MAP2K4 and MAP2K7. MAP2K4 shows a strong preference for Tyr-185 while MAP2K7 phosphorylates Tyr-183 preferentially. Inhibited by dual specificity phosphatases, such as DUSP1. Its function is as follows. Serine/threonine-protein kinase involved in various processes such as cell proliferation, differentiation, migration, transformation and programmed cell death. Extracellular stimuli such as pro-inflammatory cytokines or physical stress stimulate the stress-activated protein kinase/c-Jun N-terminal kinase (SAP/JNK) signaling pathway. In this cascade, two dual specificity kinases MAP2K4/MKK4 and MAP2K7/MKK7 phosphorylate and activate MAPK9/JNK2. In turn, MAPK9/JNK2 phosphorylates a number of transcription factors, primarily components of AP-1 such as JUN and ATF2 and thus regulates AP-1 transcriptional activity. In response to oxidative or ribotoxic stresses, inhibits rRNA synthesis by phosphorylating and inactivating the RNA polymerase 1-specific transcription initiation factor RRN3. Promotes stressed cell apoptosis by phosphorylating key regulatory factors including TP53 and YAP1. In T-cells, MAPK8 and MAPK9 are required for polarized differentiation of T-helper cells into Th1 cells. Upon T-cell receptor (TCR) stimulation, is activated by CARMA1, BCL10, MAP2K7 and MAP3K7/TAK1 to regulate JUN protein levels. Plays an important role in the osmotic stress-induced epithelial tight-junctions disruption. When activated, promotes beta-catenin/CTNNB1 degradation and inhibits the canonical Wnt signaling pathway. Also participates in neurite growth in spiral ganglion neurons. Phosphorylates the CLOCK-BMAL1 heterodimer and plays a role in the regulation of the circadian clock. Phosphorylates POU5F1, which results in the inhibition of POU5F1's transcriptional activity and enhances its proteasomal degradation. Phosphorylates ALKBH5 in response to reactive oxygen species (ROS), promoting ALKBH5 sumoylation and inactivation. The polypeptide is Mitogen-activated protein kinase 9 (Mapk9) (Rattus norvegicus (Rat)).